Here is an 884-residue protein sequence, read N- to C-terminus: Lon protease homolog 2, peroxisomal (884 aa).

A Lon N-terminal domain is found at 12–255; sequence LAILPFRNKV…KATELVDRHL (244 aa). The disordered stretch occupies residues 67-101; sequence SLLSPGVGSDSGEGGSKAPGGSAGESTKQDTKNGK. Over residues 75 to 89 the composition is skewed to gly residues; it reads SDSGEGGSKAPGGSA. An ATP-binding site is contributed by 408 to 415; sequence GPPGVGKT. A Lon proteolytic domain is found at 689-874; the sequence is VASPGVSVGL…EEVLDHAFEG (186 aa). Catalysis depends on residues S780 and K823. Residues 882 to 884 carry the Microbody targeting signal motif; that stretch reads SKL.

This sequence belongs to the peptidase S16 family. As to expression, expressed in roots, leaves and panicles.

Its subcellular location is the peroxisome matrix. The enzyme catalyses Hydrolysis of proteins in presence of ATP.. In terms of biological role, ATP-dependent serine protease that mediates the selective degradation of misfolded and unassembled polypeptides in the peroxisomal matrix. Necessary for type 2 peroxisome targeting signal (PTS2)-containing protein processing and facilitates peroxisome matrix protein import. The protein is Lon protease homolog 2, peroxisomal (LON1) of Oryza sativa subsp. indica (Rice).